The primary structure comprises 771 residues: Endoplasmin homolog (771 aa).

The first 24 residues, 1–24, serve as a signal peptide directing secretion; it reads MANSSLLRVVLVALLLLGSVTVSA. Asn63, Asp109, and Phe160 together coordinate ATP. Asn63 carries an N-linked (GlcNAc...) asparagine glycan. Positions 253–282 are disordered; it reads TAATPEPAAEEGSLDEGAVEEDPDKEGDTQ. Residues 260–277 show a composition bias toward acidic residues; the sequence is AAEEGSLDEGAVEEDPDK. 2 N-linked (GlcNAc...) asparagine glycosylation sites follow: Asn306 and Asn402. The disordered stretch occupies residues 727–771; that stretch reads ADDSLLPPDDAEYTVSDTEAEEEEEQPKVDANADEEAEAVGEDDL. Acidic residues predominate over residues 758 to 771; the sequence is NADEEAEAVGEDDL. The Prevents secretion from ER motif lies at 768 to 771; that stretch reads EDDL.

It belongs to the heat shock protein 90 family. Homotetramer.

The protein localises to the endoplasmic reticulum. Its function is as follows. Molecular chaperone that functions in the processing and transport of secreted proteins. Required for the synthesis of lipophosphoglycan (LPG), a cell surface glycoconjugate. Necessary for the attachment of the galactosyl residue to the mannose within the phosphoglycan repeats of the nascent LPG chain. Also required for addition of phosphoglycan to acid phosphatase. Not required for normal growth. Has ATPase activity. Binds heparin with micromolar affinity which may facilitate infection of host cells. This chain is Endoplasmin homolog, found in Leishmania infantum.